Reading from the N-terminus, the 260-residue chain is Global transcriptional regulator CodY (260 aa).

The interval 1–159 (MPNLLEKTRK…SSTVVGIQLL (159 aa)) is GAF domain. Residues 207–226 (ASVIADRIGITRSVIVNALR) constitute a DNA-binding region (H-T-H motif).

The protein belongs to the CodY family.

Its subcellular location is the cytoplasm. Functionally, DNA-binding global transcriptional regulator which is involved in the adaptive response to starvation and acts by directly or indirectly controlling the expression of numerous genes in response to nutrient availability. During rapid exponential growth, CodY is highly active and represses genes whose products allow adaptation to nutrient depletion. The sequence is that of Global transcriptional regulator CodY from Streptococcus equi subsp. equi (strain 4047).